A 317-amino-acid chain; its full sequence is tRNA dimethylallyltransferase (317 aa).

Gly14–Thr21 serves as a coordination point for ATP. Thr16–Thr21 contacts substrate. Positions Asp39 to Gln42 are interaction with substrate tRNA.

The protein belongs to the IPP transferase family. In terms of assembly, monomer. Mg(2+) is required as a cofactor.

It catalyses the reaction adenosine(37) in tRNA + dimethylallyl diphosphate = N(6)-dimethylallyladenosine(37) in tRNA + diphosphate. In terms of biological role, catalyzes the transfer of a dimethylallyl group onto the adenine at position 37 in tRNAs that read codons beginning with uridine, leading to the formation of N6-(dimethylallyl)adenosine (i(6)A). This Bacillus cereus (strain Q1) protein is tRNA dimethylallyltransferase.